Here is a 154-residue protein sequence, read N- to C-terminus: Myoglobin (154 aa).

The 147-residue stretch at 2–148 (GLSDEEWKKV…FRNDMASRYK (147 aa)) folds into the Globin domain. Residue histidine 65 participates in nitrite binding. Histidine 65 serves as a coordination point for O2. A heme b-binding site is contributed by histidine 94.

This sequence belongs to the globin family. In terms of assembly, monomeric.

Its subcellular location is the cytoplasm. The protein resides in the sarcoplasm. It catalyses the reaction Fe(III)-heme b-[protein] + nitric oxide + H2O = Fe(II)-heme b-[protein] + nitrite + 2 H(+). It carries out the reaction H2O2 + AH2 = A + 2 H2O. Its function is as follows. Monomeric heme protein which primary function is to store oxygen and facilitate its diffusion within muscle tissues. Reversibly binds oxygen through a pentacoordinated heme iron and enables its timely and efficient release as needed during periods of heightened demand. Depending on the oxidative conditions of tissues and cells, and in addition to its ability to bind oxygen, it also has a nitrite reductase activity whereby it regulates the production of bioactive nitric oxide. Under stress conditions, like hypoxia and anoxia, it also protects cells against reactive oxygen species thanks to its pseudoperoxidase activity. The sequence is that of Myoglobin (MB) from Varanus varius (Lace monitor lizard).